Consider the following 1334-residue polypeptide: Aldehyde oxidase 4 (1334 aa).

In terms of domain architecture, 2Fe-2S ferredoxin-type spans 6 to 93 (DELIFFVNGK…GAAVTTVEGV (88 aa)). Residues C45, C50, C53, and C75 each contribute to the [2Fe-2S] cluster site. Q114 is a Mo-molybdopterin binding site. The [2Fe-2S] cluster site is built by C115, C118, C150, and C152. C152 contributes to the Mo-molybdopterin binding site. The 187-residue stretch at 235–421 (FQGERTIWIM…LSVFIPYSGQ (187 aa)) folds into the FAD-binding PCMH-type domain. FAD is bound by residues 263-270 (LVMGNTAV), A345, T354, H358, D367, and A411. Mo-molybdopterin contacts are provided by residues A802, 802-803 (AF), L1043, 1084-1087 (GSMG), Q1199, and L1263. E1265 serves as the catalytic Proton acceptor; for azaheterocycle hydroxylase activity.

This sequence belongs to the xanthine dehydrogenase family. As to quaternary structure, homodimer. It depends on [2Fe-2S] cluster as a cofactor. FAD is required as a cofactor. Requires Mo-molybdopterin as cofactor.

It localises to the cytoplasm. It carries out the reaction an aldehyde + O2 + H2O = a carboxylate + H2O2 + H(+). The enzyme catalyses retinal + O2 + H2O = retinoate + H2O2 + H(+). Its function is as follows. Aldehyde oxidase able to catalyze the oxidation of retinaldehyde into retinoate. Acts as a negative modulator of the epidermal trophism. May be able to oxidize a wide variety of aldehydes into their corresponding carboxylates and to hydroxylate azaheterocycles. This chain is Aldehyde oxidase 4 (Aox4), found in Rattus norvegicus (Rat).